Reading from the N-terminus, the 126-residue chain is Aspartate 1-decarboxylase (126 aa).

Serine 25 (schiff-base intermediate with substrate; via pyruvic acid) is an active-site residue. Serine 25 carries the pyruvic acid (Ser) modification. Threonine 57 contacts substrate. Catalysis depends on tyrosine 58, which acts as the Proton donor. Glycine 73–alanine 75 is a binding site for substrate.

It belongs to the PanD family. In terms of assembly, heterooctamer of four alpha and four beta subunits. Pyruvate serves as cofactor. Is synthesized initially as an inactive proenzyme, which is activated by self-cleavage at a specific serine bond to produce a beta-subunit with a hydroxyl group at its C-terminus and an alpha-subunit with a pyruvoyl group at its N-terminus.

It is found in the cytoplasm. It catalyses the reaction L-aspartate + H(+) = beta-alanine + CO2. It participates in cofactor biosynthesis; (R)-pantothenate biosynthesis; beta-alanine from L-aspartate: step 1/1. In terms of biological role, catalyzes the pyruvoyl-dependent decarboxylation of aspartate to produce beta-alanine. This chain is Aspartate 1-decarboxylase, found in Xanthomonas axonopodis pv. citri (strain 306).